The chain runs to 132 residues: Replication enhancer protein (132 aa).

It belongs to the geminiviridae replication enhancer protein family. In terms of assembly, homooligomer. Interacts with the replication-associated protein (REP). Interacts with host proliferating cell nuclear antigen (PCNA). Interacts with host retinoblastoma-related protein 1 (RBR1), and may thereby deregulate the host cell cycle. Oligomerization and interaction with PCNA are necessary for optimal replication enhancement.

In terms of biological role, increases viral DNA accumulation. Enhances infectivity and symptom expression. The protein is Replication enhancer protein of Potato yellow mosaic virus (isolate Venezuela) (PYMV).